Reading from the N-terminus, the 361-residue chain is S-adenosylmethionine decarboxylase proenzyme (361 aa).

Residues Glu8 and Glu11 contribute to the active site. Residue Ser68 is the Schiff-base intermediate with substrate; via pyruvic acid of the active site. A Pyruvic acid (Ser); by autocatalysis modification is found at Ser68. Cys82 acts as the Proton donor; for catalytic activity in catalysis. Active-site proton acceptor; for processing activity residues include Ser234 and His247. The segment at 341–361 (SCGSPRSTLHRCWSETENEEE) is disordered.

This sequence belongs to the eukaryotic AdoMetDC family. It depends on pyruvate as a cofactor. Is synthesized initially as an inactive proenzyme. Formation of the active enzyme involves a self-maturation process in which the active site pyruvoyl group is generated from an internal serine residue via an autocatalytic post-translational modification. Two non-identical subunits are generated from the proenzyme in this reaction, and the pyruvate is formed at the N-terminus of the alpha chain, which is derived from the carboxyl end of the proenzyme. The post-translation cleavage follows an unusual pathway, termed non-hydrolytic serinolysis, in which the side chain hydroxyl group of the serine supplies its oxygen atom to form the C-terminus of the beta chain, while the remainder of the serine residue undergoes an oxidative deamination to produce ammonia and the pyruvoyl group blocking the N-terminus of the alpha chain.

The enzyme catalyses S-adenosyl-L-methionine + H(+) = S-adenosyl 3-(methylsulfanyl)propylamine + CO2. It participates in amine and polyamine biosynthesis; S-adenosylmethioninamine biosynthesis; S-adenosylmethioninamine from S-adenosyl-L-methionine: step 1/1. This is S-adenosylmethionine decarboxylase proenzyme (SAMDC) from Helianthus annuus (Common sunflower).